The sequence spans 571 residues: Urease subunit alpha (571 aa).

Residues 133-571 enclose the Urease domain; sequence GGIDTHVHFI…LPLTQRYFLF (439 aa). 3 residues coordinate Ni(2+): histidine 138, histidine 140, and lysine 221. Residue lysine 221 is modified to N6-carboxylysine. Histidine 223 lines the substrate pocket. Ni(2+)-binding residues include histidine 250 and histidine 276. Histidine 324 acts as the Proton donor in catalysis. Aspartate 364 is a binding site for Ni(2+).

The protein belongs to the metallo-dependent hydrolases superfamily. Urease alpha subunit family. As to quaternary structure, heterotrimer of UreA (gamma), UreB (beta) and UreC (alpha) subunits. Three heterotrimers associate to form the active enzyme. Ni cation serves as cofactor. Post-translationally, carboxylation allows a single lysine to coordinate two nickel ions.

Its subcellular location is the cytoplasm. The catalysed reaction is urea + 2 H2O + H(+) = hydrogencarbonate + 2 NH4(+). Its pathway is nitrogen metabolism; urea degradation; CO(2) and NH(3) from urea (urease route): step 1/1. The sequence is that of Urease subunit alpha from Staphylococcus aureus (strain USA300).